Consider the following 327-residue polypeptide: tRNA dimethylallyltransferase (327 aa).

14 to 21 (GPTASGKT) provides a ligand contact to ATP. Residue 16–21 (TASGKT) participates in substrate binding. 2 interaction with substrate tRNA regions span residues 39-42 (DSAL) and 163-167 (QRIQR).

Belongs to the IPP transferase family. As to quaternary structure, monomer. Mg(2+) is required as a cofactor.

It catalyses the reaction adenosine(37) in tRNA + dimethylallyl diphosphate = N(6)-dimethylallyladenosine(37) in tRNA + diphosphate. Functionally, catalyzes the transfer of a dimethylallyl group onto the adenine at position 37 in tRNAs that read codons beginning with uridine, leading to the formation of N6-(dimethylallyl)adenosine (i(6)A). The chain is tRNA dimethylallyltransferase from Xanthomonas campestris pv. campestris (strain 8004).